A 281-amino-acid polypeptide reads, in one-letter code: MARSTSGVHQGHQARKRFGQNFLVDDGVIHAIVAAIDPQPDDVLVEIGPGLGALTVPLMERVPTLQVVELDRDLVARLQRRFGDKLIVHAGDALAFDFGTLHVPGRSLRIVGNLPYNISSPLLFHLSAFADRVRDQHFMLQKEVVDRMVAAPGSKAFSRLSVMLQVRYYMELVLEVPPGSFNPPPKVDSAVVRMIPWPADKSPYAPVDMRALGTVVTLAFSQRRKVLRNTLGSLREVIDFDALGFDLGRRAEEVPVADFVAVANALPAERIAGGAPDLNED.

S-adenosyl-L-methionine-binding residues include Asn-21, Leu-23, Gly-48, Glu-69, Asp-92, and Asn-113.

It belongs to the class I-like SAM-binding methyltransferase superfamily. rRNA adenine N(6)-methyltransferase family. RsmA subfamily.

The protein localises to the cytoplasm. The catalysed reaction is adenosine(1518)/adenosine(1519) in 16S rRNA + 4 S-adenosyl-L-methionine = N(6)-dimethyladenosine(1518)/N(6)-dimethyladenosine(1519) in 16S rRNA + 4 S-adenosyl-L-homocysteine + 4 H(+). Specifically dimethylates two adjacent adenosines (A1518 and A1519) in the loop of a conserved hairpin near the 3'-end of 16S rRNA in the 30S particle. May play a critical role in biogenesis of 30S subunits. The chain is Ribosomal RNA small subunit methyltransferase A from Ralstonia nicotianae (strain ATCC BAA-1114 / GMI1000) (Ralstonia solanacearum).